Consider the following 89-residue polypeptide: Small ribosomal subunit protein uS17 (89 aa).

The protein belongs to the universal ribosomal protein uS17 family. In terms of assembly, part of the 30S ribosomal subunit.

One of the primary rRNA binding proteins, it binds specifically to the 5'-end of 16S ribosomal RNA. This chain is Small ribosomal subunit protein uS17, found in Aromatoleum aromaticum (strain DSM 19018 / LMG 30748 / EbN1) (Azoarcus sp. (strain EbN1)).